A 53-amino-acid polypeptide reads, in one-letter code: Rubredoxin (53 aa).

Positions 1–53 (MQKYVCDICGYVYDPAVGDPDNGVAPGTAFADLPEDWVCPECGVSKDEFSPEA) constitute a Rubredoxin-like domain. Residues Cys-6, Cys-9, Cys-39, and Cys-42 each contribute to the Fe cation site.

Belongs to the rubredoxin family. Fe(3+) is required as a cofactor.

Functionally, rubredoxin is a small nonheme, iron protein lacking acid-labile sulfide. Its single Fe, chelated to 4 Cys, functions as an electron acceptor and may also stabilize the conformation of the molecule. This is Rubredoxin from Butyribacterium methylotrophicum.